The primary structure comprises 1523 residues: Disco-interacting protein 2 homolog A (1523 aa).

In terms of domain architecture, DMAP1-binding spans 9 to 105; that stretch reads EAAPLPAEVL…TSSASEDEGS (97 aa). A disordered region spans residues 72 to 110; the sequence is KMPMPSKRRSALVHSSVETYTPPDTSSASEDEGSLRRPG. A compositionally biased stretch (polar residues) spans 87–99; the sequence is SVETYTPPDTSSA. Phosphothreonine is present on residues threonine 92 and threonine 115. A disordered region spans residues 132 to 158; the sequence is QGSSTSSSASSTSSHPGGRPAAAPSAS. Positions 134 to 158 are enriched in low complexity; sequence SSTSSSASSTSSHPGGRPAAAPSAS. 2 short sequence motifs (PXXP motif; required for interaction with CTTN) span residues 235-238 and 259-262; these read PKRP and PNQP.

This sequence belongs to the DIP2 family. In terms of assembly, interacts with FSTL1; DIP2A may act as a cell surface receptor for FSTL1. Interacts (via N-terminus) with CTTN (via SH3 domain); the interaction promotes acetylation of CTTN and is required for proper synaptic transmission. Interacts with SHANK3. As to expression, detected in heart, liver, spleen, lung, kidney and brain with highest levels in brain (at protein level). In adult cortex, preferentially expressed in excitatory neurons. Broadly expressed in neuronal, reproductive and vascular tissues as well as in heart, kidney, liver and lung with expression detected in neurons, mesenchyme, endothelium, smooth muscle cells and cardiomyocytes. Expressed in ectoderm-derived tissues in the developing embryo. Expressed in the developing nervous system.

The protein resides in the cell membrane. It localises to the mitochondrion. The protein localises to the cell projection. Its subcellular location is the dendritic spine. It catalyses the reaction acetate + ATP + CoA = acetyl-CoA + AMP + diphosphate. Catalyzes the de novo synthesis of acetyl-CoA in vitro. Promotes acetylation of CTTN, possibly by providing the acetyl donor, ensuring correct dendritic spine morphology and synaptic transmission. Binds to follistatin-related protein FSTL1 and may act as a cell surface receptor for FSTL1, contributing to AKT activation and subsequent FSTL1-induced survival and function of endothelial cells and cardiac myocytes. The polypeptide is Disco-interacting protein 2 homolog A (Dip2a) (Mus musculus (Mouse)).